Reading from the N-terminus, the 123-residue chain is Seripauperin-16 (123 aa).

Positions 1–20 are cleaved as a signal peptide; it reads MVKLTSIAAGVAAIAAGVAA.

It belongs to the SRP1/TIP1 family. Seripauperin subfamily.

The polypeptide is Seripauperin-16 (PAU16) (Saccharomyces cerevisiae (strain ATCC 204508 / S288c) (Baker's yeast)).